Here is a 572-residue protein sequence, read N- to C-terminus: Secreted triacylglycerol lipase LIP6 (572 aa).

Positions methionine 1–alanine 23 are cleaved as a signal peptide. Cysteine 117 and cysteine 291 are oxidised to a cystine. Serine 202 functions as the Nucleophile in the catalytic mechanism. Residue aspartate 351 is part of the active site. Asparagine 360 carries N-linked (GlcNAc...) asparagine glycosylation. Histidine 385 is an active-site residue. The interval lysine 468–methionine 572 is disordered. The segment covering proline 491 to proline 511 has biased composition (basic and acidic residues). Low complexity predominate over residues aspartate 512 to asparagine 525. A glycan (N-linked (GlcNAc...) asparagine) is linked at asparagine 525. The span at alanine 528–glycine 540 shows a compositional bias: basic residues. Residues histidine 541 to glycine 562 show a composition bias toward low complexity. The segment covering serine 563–methionine 572 has biased composition (basic residues).

It belongs to the AB hydrolase superfamily. Lipase family. Class Lip subfamily.

The protein resides in the secreted. It is found in the cell wall. The catalysed reaction is a triacylglycerol + H2O = a diacylglycerol + a fatty acid + H(+). The enzyme catalyses a monoacylglycerol + H2O = glycerol + a fatty acid + H(+). It carries out the reaction a diacylglycerol + H2O = a monoacylglycerol + a fatty acid + H(+). Its function is as follows. Secreted lipase involved in Dandruff and seborrheic dermatitis (D/SD) probably via lipase-mediated breakdown of sebaceous lipids and release of irritating free fatty acids. Shows only minimal activity against triolein. Mostly converts monoolein to di- and triolein, while free fatty acids are only produced in low amounts. This is Secreted triacylglycerol lipase LIP6 from Malassezia globosa (strain ATCC MYA-4612 / CBS 7966) (Dandruff-associated fungus).